The sequence spans 208 residues: Large ribosomal subunit protein uL3 (208 aa).

The tract at residues 116 to 146 (GFQGAIKRHGQSRGPMAHGSRYHRRPGSMGP) is disordered.

It belongs to the universal ribosomal protein uL3 family. As to quaternary structure, part of the 50S ribosomal subunit. Forms a cluster with proteins L14 and L19.

In terms of biological role, one of the primary rRNA binding proteins, it binds directly near the 3'-end of the 23S rRNA, where it nucleates assembly of the 50S subunit. The sequence is that of Large ribosomal subunit protein uL3 from Streptococcus mutans serotype c (strain ATCC 700610 / UA159).